We begin with the raw amino-acid sequence, 339 residues long: Serine/threonine-protein kinase pdik1l-B (339 aa).

Residues 8–332 (YDLIREVGRG…LELKLIQIAF (325 aa)) enclose the Protein kinase domain. ATP-binding positions include 14–22 (VGRGSYGLV) and Lys-37. The active-site Proton acceptor is Asp-164.

This sequence belongs to the protein kinase superfamily. Ser/Thr protein kinase family.

Its subcellular location is the nucleus. It catalyses the reaction L-seryl-[protein] + ATP = O-phospho-L-seryl-[protein] + ADP + H(+). The enzyme catalyses L-threonyl-[protein] + ATP = O-phospho-L-threonyl-[protein] + ADP + H(+). The sequence is that of Serine/threonine-protein kinase pdik1l-B (pdik1-b) from Xenopus laevis (African clawed frog).